A 356-amino-acid polypeptide reads, in one-letter code: Histidinol-phosphate aminotransferase 2 (356 aa).

Lys213 is subject to N6-(pyridoxal phosphate)lysine.

Belongs to the class-II pyridoxal-phosphate-dependent aminotransferase family. Histidinol-phosphate aminotransferase subfamily. In terms of assembly, homodimer. Requires pyridoxal 5'-phosphate as cofactor.

It catalyses the reaction L-histidinol phosphate + 2-oxoglutarate = 3-(imidazol-4-yl)-2-oxopropyl phosphate + L-glutamate. It participates in amino-acid biosynthesis; L-histidine biosynthesis; L-histidine from 5-phospho-alpha-D-ribose 1-diphosphate: step 7/9. In Burkholderia mallei (strain ATCC 23344), this protein is Histidinol-phosphate aminotransferase 2.